We begin with the raw amino-acid sequence, 118 residues long: Large ribosomal subunit protein bL19 (118 aa).

The protein belongs to the bacterial ribosomal protein bL19 family.

This protein is located at the 30S-50S ribosomal subunit interface and may play a role in the structure and function of the aminoacyl-tRNA binding site. This chain is Large ribosomal subunit protein bL19, found in Levilactobacillus brevis (strain ATCC 367 / BCRC 12310 / CIP 105137 / JCM 1170 / LMG 11437 / NCIMB 947 / NCTC 947) (Lactobacillus brevis).